Reading from the N-terminus, the 40-residue chain is Photosystem II reaction center protein J (40 aa).

A helical transmembrane segment spans residues 8–28 (IPLWIIGTVAGILVIGLIGIF).

The protein belongs to the PsbJ family. As to quaternary structure, PSII is composed of 1 copy each of membrane proteins PsbA, PsbB, PsbC, PsbD, PsbE, PsbF, PsbH, PsbI, PsbJ, PsbK, PsbL, PsbM, PsbT, PsbX, PsbY, PsbZ, Psb30/Ycf12, at least 3 peripheral proteins of the oxygen-evolving complex and a large number of cofactors. It forms dimeric complexes.

It localises to the plastid. It is found in the chloroplast thylakoid membrane. Its function is as follows. One of the components of the core complex of photosystem II (PSII). PSII is a light-driven water:plastoquinone oxidoreductase that uses light energy to abstract electrons from H(2)O, generating O(2) and a proton gradient subsequently used for ATP formation. It consists of a core antenna complex that captures photons, and an electron transfer chain that converts photonic excitation into a charge separation. In Nicotiana sylvestris (Wood tobacco), this protein is Photosystem II reaction center protein J.